Here is a 699-residue protein sequence, read N- to C-terminus: Elongation factor G (699 aa).

The region spanning 8–283 is the tr-type G domain; that stretch reads EQIRNIGICA…AIVDFLPSPI (276 aa). GTP-binding positions include 17–24, 81–85, and 135–138; these read AHIDAGKT, DTPGH, and NKMD.

It belongs to the TRAFAC class translation factor GTPase superfamily. Classic translation factor GTPase family. EF-G/EF-2 subfamily.

The protein localises to the cytoplasm. Functionally, catalyzes the GTP-dependent ribosomal translocation step during translation elongation. During this step, the ribosome changes from the pre-translocational (PRE) to the post-translocational (POST) state as the newly formed A-site-bound peptidyl-tRNA and P-site-bound deacylated tRNA move to the P and E sites, respectively. Catalyzes the coordinated movement of the two tRNA molecules, the mRNA and conformational changes in the ribosome. The protein is Elongation factor G (fusA) of Rickettsia prowazekii (strain Madrid E).